Reading from the N-terminus, the 282-residue chain is Pantothenate synthetase (282 aa).

Position 30 to 37 (30 to 37) interacts with ATP; sequence MGFLHDGH. The Proton donor role is filled by histidine 37. Glutamine 60 contacts (R)-pantoate. Residue glutamine 60 participates in beta-alanine binding. Residue 146-149 coordinates ATP; sequence GQKD. Residue glutamine 152 coordinates (R)-pantoate. ATP-binding positions include isoleucine 175 and 183-186; that span reads KSSR.

The protein belongs to the pantothenate synthetase family. In terms of assembly, homodimer.

The protein localises to the cytoplasm. The catalysed reaction is (R)-pantoate + beta-alanine + ATP = (R)-pantothenate + AMP + diphosphate + H(+). Its pathway is cofactor biosynthesis; (R)-pantothenate biosynthesis; (R)-pantothenate from (R)-pantoate and beta-alanine: step 1/1. Functionally, catalyzes the condensation of pantoate with beta-alanine in an ATP-dependent reaction via a pantoyl-adenylate intermediate. In Campylobacter jejuni subsp. jejuni serotype O:6 (strain 81116 / NCTC 11828), this protein is Pantothenate synthetase.